The primary structure comprises 184 residues: ATP synthase subunit b, chloroplastic (184 aa).

The chain crosses the membrane as a helical span at residues 27–49 (LATNPINLSVVLGVLIFFGKGVL).

Belongs to the ATPase B chain family. In terms of assembly, F-type ATPases have 2 components, F(1) - the catalytic core - and F(0) - the membrane proton channel. F(1) has five subunits: alpha(3), beta(3), gamma(1), delta(1), epsilon(1). F(0) has four main subunits: a(1), b(1), b'(1) and c(10-14). The alpha and beta chains form an alternating ring which encloses part of the gamma chain. F(1) is attached to F(0) by a central stalk formed by the gamma and epsilon chains, while a peripheral stalk is formed by the delta, b and b' chains.

The protein localises to the plastid. It is found in the chloroplast thylakoid membrane. Its function is as follows. F(1)F(0) ATP synthase produces ATP from ADP in the presence of a proton or sodium gradient. F-type ATPases consist of two structural domains, F(1) containing the extramembraneous catalytic core and F(0) containing the membrane proton channel, linked together by a central stalk and a peripheral stalk. During catalysis, ATP synthesis in the catalytic domain of F(1) is coupled via a rotary mechanism of the central stalk subunits to proton translocation. In terms of biological role, component of the F(0) channel, it forms part of the peripheral stalk, linking F(1) to F(0). In Oenothera elata subsp. hookeri (Hooker's evening primrose), this protein is ATP synthase subunit b, chloroplastic.